Here is a 378-residue protein sequence, read N- to C-terminus: GDP-mannose 3,5-epimerase 1 (378 aa).

Residues 36 to 62 (GAGG…SDWK), aspartate 60, and aspartate 80 contribute to the NAD(+) site. Substrate-binding positions include glycine 105 and 145–147 (SAC). Positions 175 and 179 each coordinate NAD(+). Tyrosine 175 (proton acceptor) is an active-site residue. Substrate-binding positions include asparagine 204, 217-219 (EKA), lysine 226, 242-244 (QTR), arginine 307, and serine 357.

The protein belongs to the NAD(P)-dependent epimerase/dehydratase family. As to quaternary structure, homodimer. NAD(+) is required as a cofactor.

It carries out the reaction GDP-alpha-D-mannose = GDP-beta-L-gulose. The catalysed reaction is GDP-beta-L-gulose = GDP-beta-L-galactose. Its pathway is cofactor biosynthesis; L-ascorbate biosynthesis via GDP-alpha-D-mannose pathway; L-ascorbate from GDP-alpha-D-mannose: step 1/5. Strongly activated by NAD. Activated by NADP. Slightly activated by NADH and NADPH. Inhibited by GDP. Functionally, catalyzes a reversible epimerization of GDP-D-mannose that precedes the committed step in the biosynthesis of vitamin C (L-ascorbate), resulting in the hydrolysis of the highly energetic glycosyl-pyrophosphoryl linkage. Able to catalyze 2 distinct epimerization reactions and can release both GDP-L-galactose and GDP-L-gulose from GDP-mannose. The chain is GDP-mannose 3,5-epimerase 1 (GME-1) from Oryza sativa subsp. japonica (Rice).